Consider the following 765-residue polypeptide: 5-methyltetrahydropteroyltriglutamate--homocysteine methyltransferase (765 aa).

5-methyltetrahydropteroyltri-L-glutamate contacts are provided by residues 16 to 19 and K121; that span reads RELK. L-homocysteine contacts are provided by residues 441 to 443 and E494; that span reads IGS. Residues 441–443 and E494 contribute to the L-methionine site; that span reads IGS. Residues 525–526 and W571 contribute to the 5-methyltetrahydropteroyltri-L-glutamate site; that span reads RC. D609 contributes to the L-homocysteine binding site. An L-methionine-binding site is contributed by D609. A 5-methyltetrahydropteroyltri-L-glutamate-binding site is contributed by E615. Zn(2+) is bound by residues H651, C653, and E675. H704 functions as the Proton donor in the catalytic mechanism. C736 provides a ligand contact to Zn(2+).

The protein belongs to the vitamin-B12 independent methionine synthase family. It depends on Zn(2+) as a cofactor.

The enzyme catalyses 5-methyltetrahydropteroyltri-L-glutamate + L-homocysteine = tetrahydropteroyltri-L-glutamate + L-methionine. Its pathway is amino-acid biosynthesis; L-methionine biosynthesis via de novo pathway; L-methionine from L-homocysteine (MetE route): step 1/1. Its function is as follows. Catalyzes the transfer of a methyl group from 5-methyltetrahydrofolate to homocysteine resulting in methionine formation. The polypeptide is 5-methyltetrahydropteroyltriglutamate--homocysteine methyltransferase (Saccharophagus degradans (strain 2-40 / ATCC 43961 / DSM 17024)).